The following is a 673-amino-acid chain: uncharacterized protein (673 aa).

The interval 1–95 (MLNGEKSALG…QSSAIADSIG (95 aa)) is disordered. Low complexity predominate over residues 13 to 40 (PSNSNSSSKLNAKSPNFIPSSSNIPRSS). Residues 42–60 (KTKEHSADRKPHRNSEKKT) are compositionally biased toward basic and acidic residues. The segment at 214-273 (CPFCLEEKPVAARMSRCGHVYCFSCLLRFVETPTAAEVKAAETSGTKIVKCGHRSCPICW) adopts an RING-type zinc-finger fold. The segment at 649-673 (SAPSKNSKNKKKKKLVLLSTGAAHR) is disordered.

Its subcellular location is the cytoplasm. The protein resides in the nucleus. This is an uncharacterized protein from Schizosaccharomyces pombe (strain 972 / ATCC 24843) (Fission yeast).